The chain runs to 126 residues: Cornifin alpha (126 aa).

Residue Ser-2 is modified to N-acetylserine. Tandem repeats lie at residues 3–14 (SQQQKQPCTLPP), 18–29 (QHQVKQPCQPPP), 31–38 (EPCVPKTK), 39–46 (EPCQPKVP), 47–54 (EPCQPKVP), 55–62 (EPCQPKVP), 63–70 (EPCQPKVP), 71–78 (QPCQPKVP), 79–86 (EPCQPKVP), 87–94 (EPCQPKVP), 95–102 (EPCQPKVP), 103–110 (EPCQSKVP), and 111–118 (QPCQPKVP). Residues 3-29 (SQQQKQPCTLPPQLQQHQVKQPCQPPP) are 2 X 12 AA approximate repeats. Positions 20-43 (QVKQPCQPPPQEPCVPKTKEPCQP) are disordered. Residues 31–122 (EPCVPKTKEP…CQPKVPEPCQ (92 aa)) are 11 X 8 AA approximate tandem repeats. Residues 104-126 (PCQSKVPQPCQPKVPEPCQTKQK) form a disordered region.

Belongs to the cornifin (SPRR) family. As to expression, suprabasal layers of squamous-differentiated tissues such as epidermis, esophagus, tongue and trachea.

It is found in the cytoplasm. In terms of biological role, cross-linked envelope protein of keratinocytes. It is a keratinocyte protein that first appears in the cell cytosol, but ultimately becomes cross-linked to membrane proteins by transglutaminase. All that results in the formation of an insoluble envelope beneath the plasma membrane. The protein is Cornifin alpha of Oryctolagus cuniculus (Rabbit).